Reading from the N-terminus, the 80-residue chain is MKIKDAVNMIRWKYREKIDDYVVIIIDRLTENGLKEISFSEIDDVDNNYLYLKSEENTVIPLHRVLMIKRKSDNALIWKR.

Belongs to the UPF0248 family.

The sequence is that of UPF0248 protein M1425_2629 from Saccharolobus islandicus (strain M.14.25 / Kamchatka #1) (Sulfolobus islandicus).